The sequence spans 159 residues: Protein-export protein SecB (159 aa).

It belongs to the SecB family. As to quaternary structure, homotetramer, a dimer of dimers. One homotetramer interacts with 1 SecA dimer.

Its subcellular location is the cytoplasm. Its function is as follows. One of the proteins required for the normal export of preproteins out of the cell cytoplasm. It is a molecular chaperone that binds to a subset of precursor proteins, maintaining them in a translocation-competent state. It also specifically binds to its receptor SecA. This is Protein-export protein SecB from Hahella chejuensis (strain KCTC 2396).